The primary structure comprises 145 residues: Small ribosomal subunit protein uS12 (145 aa).

This sequence belongs to the universal ribosomal protein uS12 family. In terms of assembly, part of the 30S ribosomal subunit.

In terms of biological role, with S4 and S5 plays an important role in translational accuracy. Located at the interface of the 30S and 50S subunits. The polypeptide is Small ribosomal subunit protein uS12 (Cenarchaeum symbiosum (strain A)).